Reading from the N-terminus, the 336-residue chain is Aspartate--ammonia ligase (336 aa).

This sequence belongs to the class-II aminoacyl-tRNA synthetase family. AsnA subfamily.

It localises to the cytoplasm. The enzyme catalyses L-aspartate + NH4(+) + ATP = L-asparagine + AMP + diphosphate + H(+). It participates in amino-acid biosynthesis; L-asparagine biosynthesis; L-asparagine from L-aspartate (ammonia route): step 1/1. In Ligilactobacillus salivarius (strain UCC118) (Lactobacillus salivarius), this protein is Aspartate--ammonia ligase.